A 1159-amino-acid polypeptide reads, in one-letter code: ATP-dependent helicase/deoxyribonuclease subunit B (1159 aa).

The UvrD-like helicase ATP-binding domain occupies 1 to 401 (MSIRFVYGRS…LLKNWSYESV (401 aa)). ATP is bound at residue 8-15 (GRSGTGKS). The region spanning 279 to 582 (PYRFKGNLEL…NIGDIARIKG (304 aa)) is the UvrD-like helicase C-terminal domain. 4 residues coordinate [4Fe-4S] cluster: Cys787, Cys1106, Cys1109, and Cys1115.

The protein belongs to the helicase family. AddB/RexB type 1 subfamily. In terms of assembly, heterodimer of AddA and AddB. Mg(2+) serves as cofactor. [4Fe-4S] cluster is required as a cofactor.

In terms of biological role, the heterodimer acts as both an ATP-dependent DNA helicase and an ATP-dependent, dual-direction single-stranded exonuclease. Recognizes the chi site generating a DNA molecule suitable for the initiation of homologous recombination. The AddB subunit has 5' -&gt; 3' nuclease activity but not helicase activity. The sequence is that of ATP-dependent helicase/deoxyribonuclease subunit B from Clostridium beijerinckii (strain ATCC 51743 / NCIMB 8052) (Clostridium acetobutylicum).